A 224-amino-acid chain; its full sequence is Protein FAM3D (224 aa).

Residues 1–25 (MRVSGVLRLLALIFAIVTTWMFIRS) form the signal peptide. 2 disulfides stabilise this stretch: Cys55-Cys83 and Cys61-Cys218. The 159-residue stretch at 64 to 222 (NYFAFKICSG…LEMEGCMPPK (159 aa)) folds into the GG-type lectin domain. Asn107 carries an N-linked (GlcNAc...) asparagine glycan.

It belongs to the FAM3 family. Abundantly expressed in placenta and weakly expressed in small intestine.

The protein localises to the secreted. The protein is Protein FAM3D (FAM3D) of Homo sapiens (Human).